We begin with the raw amino-acid sequence, 937 residues long: MORC family CW-type zinc finger protein 4 (937 aa).

The CW-type zinc-finger motif lies at K420–L472. Residues C429, C432, C453, and C464 each contribute to the Zn(2+) site. The disordered stretch occupies residues P606 to G637. Positions K762–S876 form a coiled coil.

Expressed at low levels in normal tissues, with highest expression levels in placenta and testis. Expression is significantly increased in subset of diffuse large B-cell lymphomas.

The protein localises to the nucleus. Functionally, histone methylation reader which binds to non-methylated (H3K4me0), monomethylated (H3K4me1), dimethylated (H3K4me2) and trimethylated (H3K4me3) 'Lys-4' on histone H3. The order of binding preference is H3K4me3 &gt; H3K4me2 &gt; H3K4me1 &gt; H3K4me0. In Homo sapiens (Human), this protein is MORC family CW-type zinc finger protein 4 (MORC4).